A 215-amino-acid chain; its full sequence is UPF0488 protein C8orf33 homolog (215 aa).

Disordered regions lie at residues 1 to 72 (MLED…DEQL), 87 to 111 (LRTQ…RSSK), and 158 to 199 (CKPV…DTKP). Residues 29–39 (AKKHKKKKKKK) are compositionally biased toward basic residues. Residues 40 to 63 (AGEGKDDQQRETKTTEGETAKQET) are compositionally biased toward basic and acidic residues. Composition is skewed to basic and acidic residues over residues 167-178 (ERNTQPKNKTDG) and 188-199 (TNEHTKTEDTKP).

Belongs to the UPF0488 family.

This Danio rerio (Zebrafish) protein is UPF0488 protein C8orf33 homolog.